The primary structure comprises 434 residues: Homoserine dehydrogenase (434 aa).

NADPH is bound by residues Thr-13 and Val-14. NAD(+) is bound by residues Val-14, Ala-33, and Ala-43. Val-14 is a binding site for NADP(+). NADPH is bound at residue Arg-45. The NADP(+) site is built by Arg-45, Arg-46, and Lys-103. Lys-103 provides a ligand contact to NADPH. The Na(+) site is built by Glu-127, Val-130, Gly-132, and Ile-134. NADP(+) contacts are provided by Gly-185 and Glu-188. L-homoserine is bound by residues Glu-188 and Asp-199. Lys-203 (proton donor) is an active-site residue. Gly-300 contacts NADPH. Gly-300 contacts NAD(+). Gly-300 contacts NADP(+). In terms of domain architecture, ACT spans 353–429; that stretch reads YLRIQAKDHP…GVSGPVVRIR (77 aa).

This sequence belongs to the homoserine dehydrogenase family. Requires a metal cation as cofactor.

The catalysed reaction is L-homoserine + NADP(+) = L-aspartate 4-semialdehyde + NADPH + H(+). The enzyme catalyses L-homoserine + NAD(+) = L-aspartate 4-semialdehyde + NADH + H(+). It functions in the pathway amino-acid biosynthesis; L-methionine biosynthesis via de novo pathway; L-homoserine from L-aspartate: step 3/3. The protein operates within amino-acid biosynthesis; L-threonine biosynthesis; L-threonine from L-aspartate: step 3/5. Feedback inhibition by threonine. In terms of biological role, catalyzes the conversion of L-aspartate-beta-semialdehyde (L-Asa) to L-homoserine (L-Hse), the third step in the biosynthesis of threonine and methionine from aspartate. In Pseudomonas aeruginosa (strain ATCC 15692 / DSM 22644 / CIP 104116 / JCM 14847 / LMG 12228 / 1C / PRS 101 / PAO1), this protein is Homoserine dehydrogenase (hom).